The primary structure comprises 212 residues: MDSKNCVVIAIAGASASGKSLIANTIYQELCEELGTNQIGMISEDSYYRDQSHLELELRKLTNYDHPKAFEHELLCSHLKMLKENCSVNIPVYSYTEHTRTLESETMTSKKVIILEGILLLNDSALREQIDVSIFIDTPLDICLMRRLVRDMAERERTMDSVLLQYTKTVRPMFLQFIEPSKQHADIIVPRGGKNRIAKDLLKTRIKYLLGK.

13 to 20 (GASASGKS) provides a ligand contact to ATP.

Belongs to the uridine kinase family.

It is found in the cytoplasm. It carries out the reaction uridine + ATP = UMP + ADP + H(+). It catalyses the reaction cytidine + ATP = CMP + ADP + H(+). The protein operates within pyrimidine metabolism; CTP biosynthesis via salvage pathway; CTP from cytidine: step 1/3. It participates in pyrimidine metabolism; UMP biosynthesis via salvage pathway; UMP from uridine: step 1/1. The protein is Uridine kinase of Psychromonas ingrahamii (strain DSM 17664 / CCUG 51855 / 37).